A 203-amino-acid polypeptide reads, in one-letter code: Holliday junction branch migration complex subunit RuvA (203 aa).

Residues 1–63 form a domain I region; sequence MIGKLSGKID…EEHIHLYGFL (63 aa). Positions 64–142 are domain II; sequence TLEEKNFFNL…KISSGSVIIK (79 aa). Positions 143 to 149 are flexible linker; it reads DSLNIKN. The interval 150 to 203 is domain III; the sequence is ITPVASNEVIKALVNLGFSRFEAQNAVQGIIIQNPEISIDELIKTALKNRNAGL.

The protein belongs to the RuvA family. Homotetramer. Forms an RuvA(8)-RuvB(12)-Holliday junction (HJ) complex. HJ DNA is sandwiched between 2 RuvA tetramers; dsDNA enters through RuvA and exits via RuvB. An RuvB hexamer assembles on each DNA strand where it exits the tetramer. Each RuvB hexamer is contacted by two RuvA subunits (via domain III) on 2 adjacent RuvB subunits; this complex drives branch migration. In the full resolvosome a probable DNA-RuvA(4)-RuvB(12)-RuvC(2) complex forms which resolves the HJ.

The protein localises to the cytoplasm. In terms of biological role, the RuvA-RuvB-RuvC complex processes Holliday junction (HJ) DNA during genetic recombination and DNA repair, while the RuvA-RuvB complex plays an important role in the rescue of blocked DNA replication forks via replication fork reversal (RFR). RuvA specifically binds to HJ cruciform DNA, conferring on it an open structure. The RuvB hexamer acts as an ATP-dependent pump, pulling dsDNA into and through the RuvAB complex. HJ branch migration allows RuvC to scan DNA until it finds its consensus sequence, where it cleaves and resolves the cruciform DNA. This is Holliday junction branch migration complex subunit RuvA from Rickettsia felis (strain ATCC VR-1525 / URRWXCal2) (Rickettsia azadi).